A 507-amino-acid chain; its full sequence is NADH-quinone oxidoreductase subunit N (507 aa).

A run of 15 helical transmembrane segments spans residues 17 to 37, 46 to 66, 81 to 101, 113 to 133, 134 to 154, 168 to 188, 190 to 210, 211 to 231, 245 to 265, 279 to 299, 307 to 327, 334 to 354, 392 to 412, 425 to 445, and 478 to 498; these read LVTL…MLTA, VMIL…LSQG, YALF…ILCY, ALYI…ASSH, FASF…LIAY, YLIL…LVYA, LGTM…AALE, LYGL…LALV, PVPI…VLLL, ITFA…LLAL, ILAY…LAFD, VAYF…VVTV, AGVF…MGFI, SLWM…FYYM, and LAAL…LIGV.

It belongs to the complex I subunit 2 family. NDH-1 is composed of 14 different subunits. Subunits NuoA, H, J, K, L, M, N constitute the membrane sector of the complex.

Its subcellular location is the cell inner membrane. The catalysed reaction is a quinone + NADH + 5 H(+)(in) = a quinol + NAD(+) + 4 H(+)(out). In terms of biological role, NDH-1 shuttles electrons from NADH, via FMN and iron-sulfur (Fe-S) centers, to quinones in the respiratory chain. The immediate electron acceptor for the enzyme in this species is believed to be ubiquinone. Couples the redox reaction to proton translocation (for every two electrons transferred, four hydrogen ions are translocated across the cytoplasmic membrane), and thus conserves the redox energy in a proton gradient. The polypeptide is NADH-quinone oxidoreductase subunit N (Nitrosospira multiformis (strain ATCC 25196 / NCIMB 11849 / C 71)).